Here is a 2139-residue protein sequence, read N- to C-terminus: U5 small nuclear ribonucleoprotein 200 kDa helicase (2139 aa).

A phosphoserine mark is found at serine 17 and serine 26. The tract at residues 39-80 is disordered; sequence EVLSLVGKLEGTRMGDKAQRTKPQMQEERRAKRRKRDEDRHD. Lysine 46 is covalently cross-linked (Glycyl lysine isopeptide (Lys-Gly) (interchain with G-Cter in SUMO2)). Over residues 48 to 80 the composition is skewed to basic and acidic residues; it reads EGTRMGDKAQRTKPQMQEERRAKRRKRDEDRHD. The stretch at 54 to 84 forms a coiled coil; the sequence is DKAQRTKPQMQEERRAKRRKRDEDRHDINKM. Serine 225 is modified (phosphoserine). A Phosphothreonine modification is found at threonine 389. The interval 395 to 2132 is interaction with C9orf78 and WBP4; the sequence is DLDQGGEALA…YKFSVDVKEA (1738 aa). Positions 490–673 constitute a Helicase ATP-binding 1 domain; it reads RAALETDENL…FLRVDPAKGL (184 aa). An ATP-binding site is contributed by 503–510; the sequence is APTGAGKT. The short motif at 615–618 is the DEAH box element; that stretch reads DEIH. In terms of domain architecture, Helicase C-terminal 1 spans 684-921; the sequence is PLEQTYVGIT…NAKDAVNWLG (238 aa). Tyrosine 709 is modified (phosphotyrosine). Residue lysine 944 forms a Glycyl lysine isopeptide (Lys-Gly) (interchain with G-Cter in SUMO) linkage. Lysine 971 is subject to N6-acetyllysine; alternate. A Glycyl lysine isopeptide (Lys-Gly) (interchain with G-Cter in SUMO); alternate cross-link involves residue lysine 971. One can recognise an SEC63 1 domain in the interval 982–1289; it reads TELGRIASHY…SCETQLPVSF (308 aa). Residues lysine 1071 and lysine 1199 each participate in a glycyl lysine isopeptide (Lys-Gly) (interchain with G-Cter in SUMO) cross-link. The segment at 1285 to 2139 is interaction with TSSC4; sequence LPVSFRHLIL…KEAETDSDSD (855 aa). The Helicase ATP-binding 2 domain occupies 1340-1515; sequence NTVYNSDDNV…WLGCSATSTF (176 aa). 1353-1360 contributes to the ATP binding site; the sequence is APTGSGKT. Threonine 1431 carries the phosphothreonine modification. The short motif at 1457–1460 is the DEAH box element; it reads DEVH. The Helicase C-terminal 2 domain maps to 1548-1756; it reads PVYHAITKHS…TIENKQDAVD (209 aa). Phosphothreonine is present on threonine 1768. The SEC63 2 domain maps to 1815-2127; that stretch reads PLNLGMIAAY…GCDQEYKFSV (313 aa). Position 2005 is a phosphoserine (serine 2005). Residue lysine 2094 forms a Glycyl lysine isopeptide (Lys-Gly) (interchain with G-Cter in SUMO) linkage. Threonine 2134 is subject to Phosphothreonine. A phosphoserine mark is found at serine 2136 and serine 2138.

This sequence belongs to the helicase family. SKI2 subfamily. As to quaternary structure, component of a core complex containing at least PRPF8, SNRNP200, EFTUD2 and SNRNP40. Component of the U5 snRNP and U4/U6-U5 tri-snRNP complexes, building blocks of the spliceosome. Component of the U4/U6-U5 tri-snRNP complex composed of the U4, U6 and U5 snRNAs and at least PRPF3, PRPF4, PRPF6, PRPF8, PRPF31, SNRNP200, TXNL4A, SNRNP40, DDX23, CD2BP2, PPIH, SNU13, EFTUD2, SART1 and USP39. Component of precatalytic, catalytic and postcatalytic spliceosomal complexes. Component of the minor spliceosome, which splices U12-type introns. Interacts with C9orf78; the interaction is direct and mutually exclusive with its interaction with WBP4. Interacts with WBP4; the interaction is mutually exclusive with its interaction with C9orf78. Interacts with PRPF8. Interacts with TSSC4; the interaction is direct, excludes recruitment of C9ORF78 and WBP4 to SNRNP200 and negatively regulates its RNA helicase activity.

Its subcellular location is the nucleus. It carries out the reaction ATP + H2O = ADP + phosphate + H(+). Its function is as follows. Catalyzes the ATP-dependent unwinding of U4/U6 RNA duplices, an essential step in the assembly of a catalytically active spliceosome. Plays a role in pre-mRNA splicing as core component of precatalytic, catalytic and postcatalytic spliceosomal complexes. As a component of the minor spliceosome, involved in the splicing of U12-type introns in pre-mRNAs. Involved in spliceosome assembly, activation and disassembly. Mediates changes in the dynamic network of RNA-RNA interactions in the spliceosome. This chain is U5 small nuclear ribonucleoprotein 200 kDa helicase (Snrnp200), found in Rattus norvegicus (Rat).